Consider the following 632-residue polypeptide: ATP-dependent RNA helicase mrh4, mitochondrial (632 aa).

The transit peptide at methionine 1 to methionine 37 directs the protein to the mitochondrion. Positions methionine 49–proline 111 are disordered. Residues arginine 97–proline 111 are compositionally biased toward basic and acidic residues. The Q motif motif lies at threonine 141–arginine 174. The region spanning aspartate 194–leucine 406 is the Helicase ATP-binding domain. Alanine 207–threonine 214 lines the ATP pocket. A DEAD box motif is present at residues aspartate 353 to aspartate 356. Positions phenylalanine 460–isoleucine 632 constitute a Helicase C-terminal domain.

The protein belongs to the DEAD box helicase family. MRH4 subfamily.

Its subcellular location is the mitochondrion. It catalyses the reaction ATP + H2O = ADP + phosphate + H(+). ATP-binding RNA helicase involved in mitochondrial RNA metabolism. Required for maintenance of mitochondrial DNA. This Aspergillus clavatus (strain ATCC 1007 / CBS 513.65 / DSM 816 / NCTC 3887 / NRRL 1 / QM 1276 / 107) protein is ATP-dependent RNA helicase mrh4, mitochondrial (mrh4).